Consider the following 165-residue polypeptide: Nucleotide-binding protein Pro_0479 (165 aa).

Belongs to the YajQ family.

Functionally, nucleotide-binding protein. The chain is Nucleotide-binding protein Pro_0479 from Prochlorococcus marinus (strain SARG / CCMP1375 / SS120).